Reading from the N-terminus, the 261-residue chain is Claudin-18 (261 aa).

Topologically, residues methionine 1 to cysteine 6 are cytoplasmic. A helical membrane pass occupies residues glutamine 7 to methionine 27. At aspartate 28–arginine 80 the chain is on the extracellular side. The chain crosses the membrane as a helical span at residues alanine 81–leucine 101. The Cytoplasmic portion of the chain corresponds to lysine 102–glycine 122. Residues isoleucine 123–leucine 143 form a helical membrane-spanning segment. Topologically, residues valine 144–alanine 174 are extracellular. Residues leucine 175–alanine 195 form a helical membrane-spanning segment. A required for role in regulation of RANKL-induced osteoclast differentiation region spans residues alanine 195–valine 261. Over cysteine 196–valine 261 the chain is Cytoplasmic. Serine 214 is subject to Phosphoserine. Positions aspartate 242–valine 261 are disordered.

It belongs to the claudin family. Interacts with TJP2/ZO-2. Interacts with TJP1/ZO-1. Interacts with YAP1 (phosphorylated); the interaction sequesters YAP1 away from the nucleus and thereby restricts transcription of YAP1 target genes. As to quaternary structure, interacts with CLDN19. Expression is restricted to the lung. In terms of tissue distribution, expression is restricted to the stomach mucosa where it is predominantly observed in the epithelial cells of the pit region and the base of the gastric glands including exocrine and endocrine cells (at protein level).

The protein localises to the cell junction. It is found in the tight junction. Its subcellular location is the cell membrane. It localises to the lateral cell membrane. Involved in alveolar fluid homeostasis via regulation of alveolar epithelial tight junction composition and therefore ion transport and solute permeability, potentially via downstream regulation of the actin cytoskeleton organization and beta-2-adrenergic signaling. Required for lung alveolarization and maintenance of the paracellular alveolar epithelial barrier. Acts to maintain epithelial progenitor cell proliferation and organ size, via regulation of YAP1 localization away from the nucleus and thereby restriction of YAP1 target gene transcription. Acts as a negative regulator of RANKL-induced osteoclast differentiation, potentially via relocation of TJP2/ZO-2 away from the nucleus, subsequently involved in bone resorption in response to calcium deficiency. Mediates the osteoprotective effects of estrogen, potentially via acting downstream of estrogen signaling independently of RANKL signaling pathways. Functionally, involved in the maintenance of homeostasis of the alveolar microenvironment via regulation of pH and subsequent T-cell activation in the alveolar space, is therefore indirectly involved in limiting C.neoformans infection. In terms of biological role, required for the formation of the gastric paracellular barrier via its role in tight junction formation, thereby involved in the response to gastric acidification. The protein is Claudin-18 (CLDN18) of Homo sapiens (Human).